Consider the following 938-residue polypeptide: Collagen alpha-1(I) chain (938 aa).

The tract at residues Gly-1–Pro-938 is disordered. 4-hydroxyproline is present on residues Pro-18, Pro-21, Pro-24, Pro-33, Pro-36, Pro-39, Pro-54, Pro-69, Pro-75, Pro-84, and Pro-90. Positions Pro-26–Met-45 are enriched in low complexity. Over residues Asn-57–Glu-71 the composition is skewed to basic and acidic residues. Lys-93 is modified (5-hydroxylysine; alternate). Lys-93 carries O-linked (Gal...) hydroxylysine; alternate glycosylation. Ser-99 carries the post-translational modification Phosphoserine. Over residues Asp-107–Ala-135 the composition is skewed to low complexity. Residues Pro-117, Pro-138, Pro-147, Pro-150, Pro-177, Pro-180, Pro-192, Pro-198, Pro-207, Pro-213, Pro-216, and Pro-231 each carry the 4-hydroxyproline modification. The segment covering Pro-137–Phe-149 has biased composition (pro residues). A compositionally biased stretch (low complexity) spans Ala-183–Ser-222. Residue Lys-234 is modified to 5-hydroxylysine. Pro-240, Pro-243, Pro-255, Pro-264, Pro-279, Pro-285, Pro-294, and Pro-300 each carry 4-hydroxyproline. The span at Gly-289 to Gly-298 shows a compositional bias: gly residues. Lys-309 is modified (5-hydroxylysine). A 4-hydroxyproline mark is found at Pro-314, Pro-323, Pro-329, Pro-335, Pro-344, Pro-347, Pro-356, Pro-365, Pro-371, Pro-383, Pro-392, Pro-401, Pro-404, Pro-422, Pro-439, Pro-445, Pro-451, Pro-458, Pro-464, Pro-476, Pro-485, Pro-497, Pro-503, Pro-509, and Pro-518. Low complexity predominate over residues Lys-338–Arg-364. Low complexity predominate over residues Ala-373–Pro-392. Position 530 is a 5-hydroxylysine (Lys-530). 3 positions are modified to 4-hydroxyproline: Pro-536, Pro-551, and Pro-557. Residues Ser-563–Ala-577 are compositionally biased toward low complexity. Ser-566 is subject to Phosphoserine. Residues Pro-578, Pro-584, Pro-587, Pro-596, Pro-602, Pro-620, Pro-629, and Pro-638 each carry the 4-hydroxyproline modification. The segment covering Ala-590–Ala-617 has biased composition (low complexity). Residues Pro-619–Pro-631 show a composition bias toward pro residues. A 5-hydroxylysine modification is found at Lys-641. A compositionally biased stretch (low complexity) spans Ser-646–Val-662. Pro-650 and Pro-656 each carry 4-hydroxyproline. Pro-664 is modified (3-hydroxyproline). 4-hydroxyproline occurs at positions 665, 674, 677, 693, 703, 712, 730, 739, 742, 748, 763, 769, 775, 784, and 790. The span at Pro-762–Ala-772 shows a compositional bias: pro residues. Residue Lys-799 is modified to 5-hydroxylysine. Positions Pro-807–Val-822 are enriched in pro residues. 3 positions are modified to 4-hydroxyproline: Pro-810, Pro-813, and Pro-816. The span at Ala-843–Pro-867 shows a compositional bias: low complexity. Pro-871, Pro-874, Pro-892, and Pro-907 each carry 4-hydroxyproline. The span at Pro-874–Pro-907 shows a compositional bias: low complexity. At Pro-912 the chain carries 3-hydroxyproline. At Pro-913 the chain carries 4-hydroxyproline. A compositionally biased stretch (pro residues) spans Val-923–Pro-938. Position 925 is a 3-hydroxyproline (Pro-925). At Pro-926 the chain carries 4-hydroxyproline. Pro-928 bears the 3-hydroxyproline mark. Pro-929 carries the post-translational modification 4-hydroxyproline. The residue at position 931 (Pro-931) is a 3-hydroxyproline. Pro-932, Pro-935, and Pro-938 each carry 4-hydroxyproline.

This sequence belongs to the fibrillar collagen family. As to quaternary structure, trimers of one alpha 2(I) and two alpha 1(I) chains. Contains mostly 4-hydroxyproline. Proline residues at the third position of the tripeptide repeating unit (G-X-Y) are hydroxylated in some or all of the chains. In terms of processing, contains 3-hydroxyproline at a few sites. This modification occurs on the first proline residue in the sequence motif Gly-Pro-Hyp, where Hyp is 4-hydroxyproline. Post-translationally, lysine residues at the third position of the tripeptide repeating unit (G-X-Y) are 5-hydroxylated in some or all of the chains. O-glycosylated on hydroxylated lysine residues. The O-linked glycan consists of a Glc-Gal disaccharide. As to expression, expressed in bones.

It is found in the secreted. The protein localises to the extracellular space. Its subcellular location is the extracellular matrix. Functionally, type I collagen is a member of group I collagen (fibrillar forming collagen). This chain is Collagen alpha-1(I) chain, found in Megalonyx jeffersonii (Jefferson's ground sloth).